Reading from the N-terminus, the 329-residue chain is GTPase Obg (329 aa).

One can recognise an Obg domain in the interval 1–159 (MQFIDQACIS…WLLHLELKLL (159 aa)). Residues 160 to 328 (AEVGIIGLPN…LLKNVWEKLE (169 aa)) enclose the OBG-type G domain. Residues 166 to 173 (GLPNAGKS), 191 to 195 (FTTLI), 213 to 216 (DIPG), 280 to 283 (NKKE), and 309 to 311 (SAA) each bind ATP. Mg(2+) is bound by residues Ser173 and Thr193.

Belongs to the TRAFAC class OBG-HflX-like GTPase superfamily. OBG GTPase family. In terms of assembly, monomer. Requires Mg(2+) as cofactor.

The protein localises to the cytoplasm. Functionally, an essential GTPase which binds GTP, GDP and possibly (p)ppGpp with moderate affinity, with high nucleotide exchange rates and a fairly low GTP hydrolysis rate. Plays a role in control of the cell cycle, stress response, ribosome biogenesis and in those bacteria that undergo differentiation, in morphogenesis control. The sequence is that of GTPase Obg from Prochlorococcus marinus (strain MIT 9211).